The sequence spans 260 residues: Cytosolic Fe-S cluster assembly factor Nubp2 homolog 2 (260 aa).

14-21 (GKGGVGKS) is an ATP binding site. Residues Cys-188 and Cys-191 each contribute to the [4Fe-4S] cluster site.

Belongs to the Mrp/NBP35 ATP-binding proteins family. NUBP2/CFD1 subfamily. As to quaternary structure, heterotetramer of 2 Nubp1 and 2 Nubp2 chains. [4Fe-4S] cluster is required as a cofactor.

Its subcellular location is the cytoplasm. Its function is as follows. Component of the cytosolic iron-sulfur (Fe/S) protein assembly (CIA) machinery. Required for maturation of extramitochondrial Fe-S proteins. The Nubp1-Nubp2 heterotetramer forms a Fe-S scaffold complex, mediating the de novo assembly of an Fe-S cluster and its transfer to target apoproteins. This Drosophila yakuba (Fruit fly) protein is Cytosolic Fe-S cluster assembly factor Nubp2 homolog 2.